Reading from the N-terminus, the 283-residue chain is Diaminopimelate epimerase (283 aa).

Positions 11 and 65 each coordinate substrate. Cys-74 serves as the catalytic Proton donor. Substrate is bound by residues 75-76 (GN), Asn-163, Asn-196, and 214-215 (ER). The active-site Proton acceptor is the Cys-223. Substrate is bound at residue 224-225 (GT).

It belongs to the diaminopimelate epimerase family. In terms of assembly, homodimer.

The protein resides in the cytoplasm. It catalyses the reaction (2S,6S)-2,6-diaminopimelate = meso-2,6-diaminopimelate. It functions in the pathway amino-acid biosynthesis; L-lysine biosynthesis via DAP pathway; DL-2,6-diaminopimelate from LL-2,6-diaminopimelate: step 1/1. Functionally, catalyzes the stereoinversion of LL-2,6-diaminopimelate (L,L-DAP) to meso-diaminopimelate (meso-DAP), a precursor of L-lysine and an essential component of the bacterial peptidoglycan. In Desulfitobacterium hafniense (strain DSM 10664 / DCB-2), this protein is Diaminopimelate epimerase.